A 166-amino-acid chain; its full sequence is NADPH-dependent 7-cyano-7-deazaguanine reductase (166 aa).

Cysteine 57 (thioimide intermediate) is an active-site residue. Catalysis depends on aspartate 64, which acts as the Proton donor. Residues 79–81 (VES) and 98–99 (HE) contribute to the substrate site.

Belongs to the GTP cyclohydrolase I family. QueF type 1 subfamily.

The protein localises to the cytoplasm. It catalyses the reaction 7-aminomethyl-7-carbaguanine + 2 NADP(+) = 7-cyano-7-deazaguanine + 2 NADPH + 3 H(+). Its pathway is tRNA modification; tRNA-queuosine biosynthesis. In terms of biological role, catalyzes the NADPH-dependent reduction of 7-cyano-7-deazaguanine (preQ0) to 7-aminomethyl-7-deazaguanine (preQ1). This Staphylococcus aureus (strain MRSA252) protein is NADPH-dependent 7-cyano-7-deazaguanine reductase.